Reading from the N-terminus, the 420-residue chain is MKLLVVGSGGREHAIAKKLLESEQVEQVFVAPGNDGMTLDGIELINIGISEHSALINFAKENDIAWTFVGPDDALAAGIVDDFEQAGLKAFGPSRLAAELEWSKDFAKQIMVKYGIPTAAFGTFSNFEEAKAYIEEQGAPIVVKADGLALGKGVVVAETVEQAVEAAREMLLDNKFGDSGARVVIEEFLAGEEFSLFALVNGDQFYILPTAQDHKRAFDGDQGPNTGGMGAYVHVPHLPQSVVDTAVDTIVKPILEGMITEGRSYLGVLYAGLILTDQGPKVIEFNARFGDPETQIILPRLTSDFAQNIDDILHKRPTQLTWLNSGVTLGVVVASNGYPLDYEKGVTLPAKTEGDITTYYAGARFAENSRALLSNGGRVYMLVTTADTVQDAQEKIYSELKNQDTTGLFYRTDIGSKAVK.

The 207-residue stretch at 108 to 314 folds into the ATP-grasp domain; the sequence is KQIMVKYGIP…FAQNIDDILH (207 aa). 134–195 provides a ligand contact to ATP; the sequence is IEEQGAPIVV…EEFLAGEEFS (62 aa). Mg(2+) contacts are provided by Glu284 and Asn286.

This sequence belongs to the GARS family. The cofactor is Mg(2+). Requires Mn(2+) as cofactor.

It carries out the reaction 5-phospho-beta-D-ribosylamine + glycine + ATP = N(1)-(5-phospho-beta-D-ribosyl)glycinamide + ADP + phosphate + H(+). The protein operates within purine metabolism; IMP biosynthesis via de novo pathway; N(1)-(5-phospho-D-ribosyl)glycinamide from 5-phospho-alpha-D-ribose 1-diphosphate: step 2/2. The chain is Phosphoribosylamine--glycine ligase from Streptococcus suis.